A 512-amino-acid polypeptide reads, in one-letter code: ATP synthase subunit alpha (512 aa).

169 to 176 provides a ligand contact to ATP; the sequence is GDRQTGKT.

This sequence belongs to the ATPase alpha/beta chains family. F-type ATPases have 2 components, CF(1) - the catalytic core - and CF(0) - the membrane proton channel. CF(1) has five subunits: alpha(3), beta(3), gamma(1), delta(1), epsilon(1). CF(0) has three main subunits: a(1), b(2) and c(9-12). The alpha and beta chains form an alternating ring which encloses part of the gamma chain. CF(1) is attached to CF(0) by a central stalk formed by the gamma and epsilon chains, while a peripheral stalk is formed by the delta and b chains.

The protein resides in the cell inner membrane. It catalyses the reaction ATP + H2O + 4 H(+)(in) = ADP + phosphate + 5 H(+)(out). Functionally, produces ATP from ADP in the presence of a proton gradient across the membrane. The alpha chain is a regulatory subunit. The polypeptide is ATP synthase subunit alpha (Orientia tsutsugamushi (strain Boryong) (Rickettsia tsutsugamushi)).